A 116-amino-acid polypeptide reads, in one-letter code: Ribosome-binding factor A (116 aa).

It belongs to the RbfA family. As to quaternary structure, monomer. Binds 30S ribosomal subunits, but not 50S ribosomal subunits or 70S ribosomes.

It localises to the cytoplasm. Its function is as follows. One of several proteins that assist in the late maturation steps of the functional core of the 30S ribosomal subunit. Associates with free 30S ribosomal subunits (but not with 30S subunits that are part of 70S ribosomes or polysomes). Required for efficient processing of 16S rRNA. May interact with the 5'-terminal helix region of 16S rRNA. In Streptococcus sanguinis (strain SK36), this protein is Ribosome-binding factor A.